Reading from the N-terminus, the 381-residue chain is Dual specificity protein phosphatase 6 (381 aa).

The Rhodanese domain occupies 30 to 148; it reads GNEQLLLMDC…FQAEFALHCE (119 aa). A disordered region spans residues 176–203; that stretch reads SSSDIESDLDRDPNSATDSDGSPLSNSQ. Residues 189-203 show a composition bias toward polar residues; it reads NSATDSDGSPLSNSQ. Residues 206 to 349 enclose the Tyrosine-protein phosphatase domain; sequence FPVEILPFLY…LLDFERTLGL (144 aa). Cys293 functions as the Phosphocysteine intermediate in the catalytic mechanism.

This sequence belongs to the protein-tyrosine phosphatase family. Non-receptor class dual specificity subfamily. Interacts with MAPK1/ERK2. In terms of processing, ubiquitinated by the SCF(FBXO31) complex, leading to its proteasomal degradation. As to expression, expressed in lung, heart, brain, and kidney, but not significantly in skeletal muscle or testis.

The protein resides in the cytoplasm. The catalysed reaction is O-phospho-L-tyrosyl-[protein] + H2O = L-tyrosyl-[protein] + phosphate. It carries out the reaction O-phospho-L-seryl-[protein] + H2O = L-seryl-[protein] + phosphate. It catalyses the reaction O-phospho-L-threonyl-[protein] + H2O = L-threonyl-[protein] + phosphate. Its function is as follows. Dual specificity protein phosphatase, which mediates dephosphorylation and inactivation of MAP kinases. Has a specificity for the ERK family. Implicated in muscle and neuronal differentiation. Plays an important role in alleviating chronic postoperative pain. Necessary for the normal dephosphorylation of the long-lasting phosphorylated forms of spinal MAPK1/3 and MAP kinase p38 induced by peripheral surgery, which drives the resolution of acute postoperative allodynia. Also important for dephosphorylation of MAPK1/3 in local wound tissue, which further contributes to resolution of acute pain. This chain is Dual specificity protein phosphatase 6 (Dusp6), found in Rattus norvegicus (Rat).